Consider the following 149-residue polypeptide: Endoribonuclease YbeY (149 aa).

Positions 113, 117, and 123 each coordinate Zn(2+).

It belongs to the endoribonuclease YbeY family. Requires Zn(2+) as cofactor.

It localises to the cytoplasm. Functionally, single strand-specific metallo-endoribonuclease involved in late-stage 70S ribosome quality control and in maturation of the 3' terminus of the 16S rRNA. This Saccharophagus degradans (strain 2-40 / ATCC 43961 / DSM 17024) protein is Endoribonuclease YbeY.